Here is a 292-residue protein sequence, read N- to C-terminus: Phosphatidylserine decarboxylase proenzyme (292 aa).

Active-site charge relay system; for autoendoproteolytic cleavage activity residues include Asp89, His146, and Ser252. Residue Ser252 is the Schiff-base intermediate with substrate; via pyruvic acid; for decarboxylase activity of the active site. Ser252 carries the pyruvic acid (Ser); by autocatalysis modification.

The protein belongs to the phosphatidylserine decarboxylase family. PSD-B subfamily. Prokaryotic type I sub-subfamily. Heterodimer of a large membrane-associated beta subunit and a small pyruvoyl-containing alpha subunit. It depends on pyruvate as a cofactor. In terms of processing, is synthesized initially as an inactive proenzyme. Formation of the active enzyme involves a self-maturation process in which the active site pyruvoyl group is generated from an internal serine residue via an autocatalytic post-translational modification. Two non-identical subunits are generated from the proenzyme in this reaction, and the pyruvate is formed at the N-terminus of the alpha chain, which is derived from the carboxyl end of the proenzyme. The autoendoproteolytic cleavage occurs by a canonical serine protease mechanism, in which the side chain hydroxyl group of the serine supplies its oxygen atom to form the C-terminus of the beta chain, while the remainder of the serine residue undergoes an oxidative deamination to produce ammonia and the pyruvoyl prosthetic group on the alpha chain. During this reaction, the Ser that is part of the protease active site of the proenzyme becomes the pyruvoyl prosthetic group, which constitutes an essential element of the active site of the mature decarboxylase.

The protein resides in the cell membrane. It carries out the reaction a 1,2-diacyl-sn-glycero-3-phospho-L-serine + H(+) = a 1,2-diacyl-sn-glycero-3-phosphoethanolamine + CO2. Its pathway is phospholipid metabolism; phosphatidylethanolamine biosynthesis; phosphatidylethanolamine from CDP-diacylglycerol: step 2/2. Its function is as follows. Catalyzes the formation of phosphatidylethanolamine (PtdEtn) from phosphatidylserine (PtdSer). This Shewanella baltica (strain OS185) protein is Phosphatidylserine decarboxylase proenzyme.